The sequence spans 206 residues: Small ribosomal subunit protein uS4 (206 aa).

The region spanning 96 to 156 (GRLDNVVYRM…EKAKKQSRVK (61 aa)) is the S4 RNA-binding domain.

This sequence belongs to the universal ribosomal protein uS4 family. Part of the 30S ribosomal subunit. Contacts protein S5. The interaction surface between S4 and S5 is involved in control of translational fidelity.

In terms of biological role, one of the primary rRNA binding proteins, it binds directly to 16S rRNA where it nucleates assembly of the body of the 30S subunit. With S5 and S12 plays an important role in translational accuracy. The protein is Small ribosomal subunit protein uS4 of Cronobacter sakazakii (strain ATCC BAA-894) (Enterobacter sakazakii).